A 174-amino-acid polypeptide reads, in one-letter code: Transcription antitermination protein NusB (174 aa).

It belongs to the NusB family.

Involved in transcription antitermination. Required for transcription of ribosomal RNA (rRNA) genes. Binds specifically to the boxA antiterminator sequence of the ribosomal RNA (rrn) operons. This Rhodopseudomonas palustris (strain ATCC BAA-98 / CGA009) protein is Transcription antitermination protein NusB.